Here is an 834-residue protein sequence, read N- to C-terminus: Glycerol-3-phosphate acyltransferase (834 aa).

The short motif at 309–314 is the HXXXXD motif element; that stretch reads CHRSHI.

Belongs to the GPAT/DAPAT family.

The protein localises to the cell inner membrane. The enzyme catalyses sn-glycerol 3-phosphate + an acyl-CoA = a 1-acyl-sn-glycero-3-phosphate + CoA. It participates in phospholipid metabolism; CDP-diacylglycerol biosynthesis; CDP-diacylglycerol from sn-glycerol 3-phosphate: step 1/3. The sequence is that of Glycerol-3-phosphate acyltransferase from Pseudomonas fluorescens (strain Pf0-1).